The sequence spans 311 residues: Formimidoylglutamase (311 aa).

H130, D155, H157, D159, C242, and D244 together coordinate Mn(2+).

Belongs to the arginase family. Mn(2+) is required as a cofactor.

The enzyme catalyses N-formimidoyl-L-glutamate + H2O = formamide + L-glutamate. Its pathway is amino-acid degradation; L-histidine degradation into L-glutamate; L-glutamate from N-formimidoyl-L-glutamate (hydrolase route): step 1/1. Functionally, catalyzes the conversion of N-formimidoyl-L-glutamate to L-glutamate and formamide. The sequence is that of Formimidoylglutamase from Staphylococcus aureus (strain bovine RF122 / ET3-1).